Here is a 256-residue protein sequence, read N- to C-terminus: Leucine-rich repeat-containing protein 18 (256 aa).

LRR repeat units lie at residues 28–49 (GRKRLDLSKMGITTFPKCILRL), 51–72 (EIDELDLSRNMIRKIPDSISKF), 74–95 (NLRWLDLHSNYIDKLPESIGQM), 97–118 (SLLFLNVSNNRLTTNGLPVELN), 122–144 (NIRTVNLGLNHLDSVPTTLGALK), 145–167 (ELHEVGLHDNLLTSIPAGISKLP), 168–189 (KLKKLNVKRNPFPKPDESDMFV), and 194–215 (RLENLYLVEEKDLCSSCLQKCQ).

The protein resides in the cytoplasm. In terms of biological role, may be involved in the regulation of spermatogenesis and sperm maturation. This chain is Leucine-rich repeat-containing protein 18 (Lrrc18), found in Rattus norvegicus (Rat).